The sequence spans 907 residues: Eukaryotic translation initiation factor 4 gamma 2 (907 aa).

Position 1 is an N-acetylmethionine (M1). Positions 1 to 71 (MESAIAEGGA…SAANNSANEK (71 aa)) are disordered. Residue S11 is modified to Phosphoserine. In terms of domain architecture, MIF4G spans 78–308 (FRKVRGILNK…QDTVELREHH (231 aa)). T89 carries the post-translational modification Phosphothreonine. Position 360 is an omega-N-methylarginine (R360). S395 is subject to Phosphoserine. An N6-methyllysine modification is found at K431. Residue S443 is modified to Phosphoserine. The segment at 498–541 (PPSAQPPRTQTPPLGQTPQLGLKTNPPLIQEKPAKTSKKPPPSK) is disordered. The segment covering 503–516 (PPRTQTPPLGQTPQ) has biased composition (polar residues). At R505 the chain carries Omega-N-methylarginine. A phosphothreonine mark is found at T508 and T514. One can recognise an MI domain in the interval 543–666 (ELLKLTETVV…SISELAQPLE (124 aa)). K575 participates in a covalent cross-link: Glycyl lysine isopeptide (Lys-Gly) (interchain with G-Cter in SUMO2). The 185-residue stretch at 720-904 (EGKGLSFLFP…ETAEEEESEE (185 aa)) folds into the W2 domain. S902 is modified (phosphoserine).

The protein belongs to the eukaryotic initiation factor 4G family. In terms of assembly, interacts with the serine/threonine protein kinases MKNK1 and MKNK2. Binds EIF4A and EIF3. Interacts with MIF4GD. Interacts with DAZAP2. In terms of processing, phosphorylation; hyperphosphorylated during mitosis.

Functionally, appears to play a role in the switch from cap-dependent to IRES-mediated translation during mitosis, apoptosis and viral infection. Cleaved by some caspases and viral proteases. This chain is Eukaryotic translation initiation factor 4 gamma 2, found in Oryctolagus cuniculus (Rabbit).